Consider the following 235-residue polypeptide: uncharacterized protein (235 aa).

This is an uncharacterized protein from Invertebrate iridescent virus 6 (IIV-6).